Here is a 40-residue protein sequence, read N- to C-terminus: Ribosome-inactivating protein saporin-1 (40 aa).

This sequence belongs to the ribosome-inactivating protein family. Type 1 RIP subfamily.

It carries out the reaction Endohydrolysis of the N-glycosidic bond at one specific adenosine on the 28S rRNA.. In terms of biological role, ribosome-inactivating protein of type 1, inhibits protein synthesis in animal cells. This is Ribosome-inactivating protein saporin-1 (SAP1) from Saponaria officinalis (Common soapwort).